The following is a 301-amino-acid chain: WD repeat-containing protein SL1-17 (301 aa).

WD repeat units follow at residues 11–54, 59–98, 101–140, 143–182, 184–223, 227–266, and 269–300; these read AHKE…LKCL, GHRLGVISVDINSTGTLAASSSLDSQILLWDLETGRLTKT, GDPADTWTIAFSPDSRFLATGSHTGCVNMINVQTAQKEGS, LEGKFVYXLAYISDGSKLAAGTINGLVSICDLETGSVQFL, GHATPVRSVSFSPDGRLLASASDDKQIKVFDVRDGRLVIP, GHKGWVVSVDFASDNRHLVTASTDCSVRIWDLASKEEKHC, and THEDQVWCARYSPQGNNIISVGDDRSIMIYQC.

The polypeptide is WD repeat-containing protein SL1-17 (Schistosoma mansoni (Blood fluke)).